The sequence spans 876 residues: DNA mismatch repair protein MutS (876 aa).

628-635 (GPNMAGKS) lines the ATP pocket.

Belongs to the DNA mismatch repair MutS family.

This protein is involved in the repair of mismatches in DNA. It is possible that it carries out the mismatch recognition step. This protein has a weak ATPase activity. This is DNA mismatch repair protein MutS from Chlorobaculum parvum (strain DSM 263 / NCIMB 8327) (Chlorobium vibrioforme subsp. thiosulfatophilum).